Consider the following 344-residue polypeptide: 4-hydroxy-2-oxovalerate aldolase (344 aa).

Residues 8-260 enclose the Pyruvate carboxyltransferase domain; sequence VTLHDMSLRD…NHGIDLYKIM (253 aa). Position 16–17 (16–17) interacts with substrate; sequence RD. Mn(2+) is bound at residue D17. H20 serves as the catalytic Proton acceptor. Substrate contacts are provided by S170 and H199. Residues H199 and H201 each coordinate Mn(2+). Y290 is a binding site for substrate.

It belongs to the 4-hydroxy-2-oxovalerate aldolase family.

It carries out the reaction (S)-4-hydroxy-2-oxopentanoate = acetaldehyde + pyruvate. The chain is 4-hydroxy-2-oxovalerate aldolase (mhpE) from Pseudoalteromonas translucida (strain TAC 125).